The primary structure comprises 127 residues: Holo-[acyl-carrier-protein] synthase (127 aa).

2 residues coordinate Mg(2+): aspartate 8 and glutamate 57.

The protein belongs to the P-Pant transferase superfamily. AcpS family. Mg(2+) is required as a cofactor.

It is found in the cytoplasm. The catalysed reaction is apo-[ACP] + CoA = holo-[ACP] + adenosine 3',5'-bisphosphate + H(+). Functionally, transfers the 4'-phosphopantetheine moiety from coenzyme A to a Ser of acyl-carrier-protein. This chain is Holo-[acyl-carrier-protein] synthase, found in Vesicomyosocius okutanii subsp. Calyptogena okutanii (strain HA).